Here is an 886-residue protein sequence, read N- to C-terminus: Alanine--tRNA ligase (886 aa).

His564, His568, Cys666, and His670 together coordinate Zn(2+).

It belongs to the class-II aminoacyl-tRNA synthetase family. Zn(2+) serves as cofactor.

The protein resides in the cytoplasm. The enzyme catalyses tRNA(Ala) + L-alanine + ATP = L-alanyl-tRNA(Ala) + AMP + diphosphate. Its function is as follows. Catalyzes the attachment of alanine to tRNA(Ala) in a two-step reaction: alanine is first activated by ATP to form Ala-AMP and then transferred to the acceptor end of tRNA(Ala). Also edits incorrectly charged Ser-tRNA(Ala) and Gly-tRNA(Ala) via its editing domain. The chain is Alanine--tRNA ligase from Prochlorococcus marinus (strain MIT 9515).